An 83-amino-acid chain; its full sequence is uncharacterized protein (83 aa).

3 helical membrane-spanning segments follow: residues 7 to 26 (FARF…IVSY), 36 to 58 (LSPL…ILPF), and 65 to 82 (ILTV…YLAF).

The protein localises to the cell membrane. This is an uncharacterized protein from Archaeoglobus fulgidus (strain ATCC 49558 / DSM 4304 / JCM 9628 / NBRC 100126 / VC-16).